A 66-amino-acid polypeptide reads, in one-letter code: Ocellatin-PT5 (66 aa).

An N-terminal signal peptide occupies residues 1 to 22 (MAFLKKSLFLVLFLGLVSLSIC). Residues 23-39 (DEEKRQDEDDDDDDDEE) constitute a propeptide that is removed on maturation. Valine amide is present on V66.

As to expression, expressed by the skin glands.

Its subcellular location is the secreted. In terms of biological role, has antibacterial activity against Gram-negative bacterium E.coli ATCC 25922 (MIC=300 uM) but not against S.pneumoniae ATCC 700603, S.choleraesuis ATCC 14028 or Gram-positive bacterium S.aureus ATCC 29313. Shows very little hemolytic activity and no cytotoxicity. The protein is Ocellatin-PT5 of Leptodactylus pustulatus (Ceara white-lipped frog).